We begin with the raw amino-acid sequence, 116 residues long: Holo-[acyl-carrier-protein] synthase (116 aa).

Positions 8 and 50 each coordinate Mg(2+).

The protein belongs to the P-Pant transferase superfamily. AcpS family. Requires Mg(2+) as cofactor.

The protein resides in the cytoplasm. It carries out the reaction apo-[ACP] + CoA = holo-[ACP] + adenosine 3',5'-bisphosphate + H(+). In terms of biological role, transfers the 4'-phosphopantetheine moiety from coenzyme A to a Ser of acyl-carrier-protein. This Beutenbergia cavernae (strain ATCC BAA-8 / DSM 12333 / CCUG 43141 / JCM 11478 / NBRC 16432 / NCIMB 13614 / HKI 0122) protein is Holo-[acyl-carrier-protein] synthase.